The sequence spans 794 residues: LPS-assembly protein LptD (794 aa).

The signal sequence occupies residues 1–31 (MPSHCSSLLCARFRLSSLAVIVALAASGVRA).

This sequence belongs to the LptD family. In terms of assembly, component of the lipopolysaccharide transport and assembly complex. Interacts with LptE and LptA.

The protein resides in the cell outer membrane. Functionally, together with LptE, is involved in the assembly of lipopolysaccharide (LPS) at the surface of the outer membrane. The sequence is that of LPS-assembly protein LptD from Marinobacter nauticus (strain ATCC 700491 / DSM 11845 / VT8) (Marinobacter aquaeolei).